We begin with the raw amino-acid sequence, 99 residues long: Acylphosphatase-1 (99 aa).

The residue at position 2 (Ala-2) is an N-acetylalanine. The 91-residue stretch at 9–99 (SVDYEVSGRV…LEHTDFQIRK (91 aa)) folds into the Acylphosphatase-like domain. Catalysis depends on residues Arg-24 and Asn-42.

The protein belongs to the acylphosphatase family. As to expression, organ-common type isozyme is found in many different tissues.

The enzyme catalyses an acyl phosphate + H2O = a carboxylate + phosphate + H(+). The protein is Acylphosphatase-1 (ACYP1) of Gallus gallus (Chicken).